The following is a 307-amino-acid chain: uncharacterized protein (307 aa).

Residues 12 to 34 (LLAFLLALIMIGSVFAYMLSGGS) traverse the membrane as a helical segment.

Its subcellular location is the membrane. This is an uncharacterized protein from Archaeoglobus fulgidus (strain ATCC 49558 / DSM 4304 / JCM 9628 / NBRC 100126 / VC-16).